We begin with the raw amino-acid sequence, 432 residues long: Enolase (432 aa).

Position 163 (Q163) interacts with (2R)-2-phosphoglycerate. Residue E205 is the Proton donor of the active site. Mg(2+)-binding residues include D242, E285, and D312. K337, R366, S367, and K388 together coordinate (2R)-2-phosphoglycerate. The active-site Proton acceptor is K337.

Belongs to the enolase family. Mg(2+) is required as a cofactor.

Its subcellular location is the cytoplasm. The protein localises to the secreted. It is found in the cell surface. It carries out the reaction (2R)-2-phosphoglycerate = phosphoenolpyruvate + H2O. Its pathway is carbohydrate degradation; glycolysis; pyruvate from D-glyceraldehyde 3-phosphate: step 4/5. In terms of biological role, catalyzes the reversible conversion of 2-phosphoglycerate (2-PG) into phosphoenolpyruvate (PEP). It is essential for the degradation of carbohydrates via glycolysis. This is Enolase from Bifidobacterium adolescentis (strain ATCC 15703 / DSM 20083 / NCTC 11814 / E194a).